Here is a 32-residue protein sequence, read N- to C-terminus: GGSVPCIETCVWTGCFLVPGCSCKSDKKCYLN.

Residues 1–32 constitute a cross-link (cyclopeptide (Gly-Asn)); that stretch reads GGSVPCIETCVWTGCFLVPGCSCKSDKKCYLN. 3 disulfide bridges follow: Cys6/Cys21, Cys10/Cys23, and Cys15/Cys29.

This is a cyclic peptide.

Probably participates in a plant defense mechanism. In Gloeospermum pauciflorum, this protein is Cyclotide glopa B.